The sequence spans 481 residues: Zygotic gap protein knirps (481 aa).

A DNA-binding region (nuclear receptor) is located at residues 2–78 (NQTCKVCGEP…VGMSKGGSRY (77 aa)). NR C4-type zinc fingers lie at residues 5–25 (CKVCGEPAAGFHFGAFTCEGC) and 42–66 (CKNDGKCIIDKKNRTTCKACRLRKC). Low complexity-rich tracts occupy residues 100–111 (AAAGKAPGHATG), 127–148 (QQQQQQHQQQQQQQHQHQQQQQ), 245–264 (TPPTVATVPQQSQPQPAASP), 316–335 (SHSSSASPTPSKSQSSSPLS), and 420–440 (TTNSCSSSTSTSSSNSSTSST). Disordered regions lie at residues 100 to 161 (AAAG…GYTG), 231 to 294 (SVDS…PHTI), 308 to 336 (LLPGLTTASHSSSASPTPSKSQSSSPLSF), and 420 to 442 (TTNSCSSSTSTSSSNSSTSSTEA).

It belongs to the nuclear hormone receptor family. NR0 subfamily.

Its subcellular location is the nucleus. In terms of biological role, transcriptional repressor. Binds to multiple sites in the eve stripe 3 enhancer element. Plays an essential role in the segmentation process both by refining the expression patterns of gap genes and by establishing pair-rules stripes of gene expression. The protein is Zygotic gap protein knirps (kni) of Drosophila virilis (Fruit fly).